The sequence spans 319 residues: ATP-dependent 6-phosphofructokinase (319 aa).

Gly11 provides a ligand contact to ATP. Residue 21–25 (RAVVR) participates in ADP binding. Residues 72 to 73 (RC) and 102 to 105 (GEGS) each bind ATP. Glu103 is a binding site for Mg(2+). 126–128 (TID) contacts substrate. Catalysis depends on Asp128, which acts as the Proton acceptor. ADP is bound at residue Lys155. Substrate is bound by residues Arg163 and 170 to 172 (MGR). ADP-binding positions include 186 to 188 (GAE), Arg212, and 214 to 216 (KIN). Substrate contacts are provided by residues Glu223, Arg244, and 250–253 (HVQR).

This sequence belongs to the phosphofructokinase type A (PFKA) family. ATP-dependent PFK group I subfamily. Prokaryotic clade 'B1' sub-subfamily. In terms of assembly, homotetramer. Requires Mg(2+) as cofactor.

It is found in the cytoplasm. The catalysed reaction is beta-D-fructose 6-phosphate + ATP = beta-D-fructose 1,6-bisphosphate + ADP + H(+). It participates in carbohydrate degradation; glycolysis; D-glyceraldehyde 3-phosphate and glycerone phosphate from D-glucose: step 3/4. Its activity is regulated as follows. Allosterically activated by ADP and other diphosphonucleosides, and allosterically inhibited by phosphoenolpyruvate. Catalyzes the phosphorylation of D-fructose 6-phosphate to fructose 1,6-bisphosphate by ATP, the first committing step of glycolysis. The chain is ATP-dependent 6-phosphofructokinase from Thermotoga neapolitana (strain ATCC 49049 / DSM 4359 / NBRC 107923 / NS-E).